Here is a 189-residue protein sequence, read N- to C-terminus: Peptidyl-tRNA hydrolase (189 aa).

Y16 contacts tRNA. H21 (proton acceptor) is an active-site residue. TRNA is bound by residues F67, N69, and N115.

Belongs to the PTH family. In terms of assembly, monomer.

Its subcellular location is the cytoplasm. It carries out the reaction an N-acyl-L-alpha-aminoacyl-tRNA + H2O = an N-acyl-L-amino acid + a tRNA + H(+). Functionally, hydrolyzes ribosome-free peptidyl-tRNAs (with 1 or more amino acids incorporated), which drop off the ribosome during protein synthesis, or as a result of ribosome stalling. In terms of biological role, catalyzes the release of premature peptidyl moieties from peptidyl-tRNA molecules trapped in stalled 50S ribosomal subunits, and thus maintains levels of free tRNAs and 50S ribosomes. The sequence is that of Peptidyl-tRNA hydrolase from Legionella pneumophila (strain Lens).